The sequence spans 220 residues: Phosphatidylserine decarboxylase proenzyme (220 aa).

Catalysis depends on S188, which acts as the Schiff-base intermediate with substrate; via pyruvic acid. S188 carries the post-translational modification Pyruvic acid (Ser); by autocatalysis.

It belongs to the phosphatidylserine decarboxylase family. PSD-A subfamily. In terms of assembly, heterodimer of a large membrane-associated beta subunit and a small pyruvoyl-containing alpha subunit. Requires pyruvate as cofactor. Is synthesized initially as an inactive proenzyme. Formation of the active enzyme involves a self-maturation process in which the active site pyruvoyl group is generated from an internal serine residue via an autocatalytic post-translational modification. Two non-identical subunits are generated from the proenzyme in this reaction, and the pyruvate is formed at the N-terminus of the alpha chain, which is derived from the carboxyl end of the proenzyme. The post-translation cleavage follows an unusual pathway, termed non-hydrolytic serinolysis, in which the side chain hydroxyl group of the serine supplies its oxygen atom to form the C-terminus of the beta chain, while the remainder of the serine residue undergoes an oxidative deamination to produce ammonia and the pyruvoyl prosthetic group on the alpha chain.

The protein resides in the cell membrane. It catalyses the reaction a 1,2-diacyl-sn-glycero-3-phospho-L-serine + H(+) = a 1,2-diacyl-sn-glycero-3-phosphoethanolamine + CO2. Its pathway is phospholipid metabolism; phosphatidylethanolamine biosynthesis; phosphatidylethanolamine from CDP-diacylglycerol: step 2/2. Functionally, catalyzes the formation of phosphatidylethanolamine (PtdEtn) from phosphatidylserine (PtdSer). The polypeptide is Phosphatidylserine decarboxylase proenzyme (Cytophaga hutchinsonii (strain ATCC 33406 / DSM 1761 / CIP 103989 / NBRC 15051 / NCIMB 9469 / D465)).